A 344-amino-acid polypeptide reads, in one-letter code: Dihydroorotate dehydrogenase (quinone) (344 aa).

Residues 65 to 69 (AGLDK) and threonine 89 contribute to the FMN site. Lysine 69 contributes to the substrate binding site. 114–118 (NRMGF) provides a ligand contact to substrate. Positions 145 and 178 each coordinate FMN. Asparagine 178 contributes to the substrate binding site. Serine 181 functions as the Nucleophile in the catalytic mechanism. Asparagine 183 provides a ligand contact to substrate. Positions 223 and 251 each coordinate FMN. 252–253 (NT) lines the substrate pocket. FMN contacts are provided by residues glycine 274, glycine 303, and 324-325 (YS).

It belongs to the dihydroorotate dehydrogenase family. Type 2 subfamily. Monomer. It depends on FMN as a cofactor.

The protein resides in the cell membrane. It carries out the reaction (S)-dihydroorotate + a quinone = orotate + a quinol. Its pathway is pyrimidine metabolism; UMP biosynthesis via de novo pathway; orotate from (S)-dihydroorotate (quinone route): step 1/1. Functionally, catalyzes the conversion of dihydroorotate to orotate with quinone as electron acceptor. The sequence is that of Dihydroorotate dehydrogenase (quinone) from Cupriavidus taiwanensis (strain DSM 17343 / BCRC 17206 / CCUG 44338 / CIP 107171 / LMG 19424 / R1) (Ralstonia taiwanensis (strain LMG 19424)).